The following is a 136-amino-acid chain: Histone H3 (136 aa).

Positions 1–42 are disordered; that stretch reads MARTKQTARKSTGGKAPRKQLATKAAAKSAPATGGVKKPHRY. An N6-methylated lysine modification is found at K5. K10 bears the N6-acetyllysine; alternate mark. The residue at position 10 (K10) is an N6-methylated lysine; alternate. S11 carries the phosphoserine modification. 2 positions are modified to N6-acetyllysine: K15 and K24. Positions 22–33 are enriched in low complexity; the sequence is ATKAAAKSAPAT. Residues K28, K37, and K80 each carry the N6-methylated lysine modification.

The protein belongs to the histone H3 family. The nucleosome is a histone octamer containing two molecules each of H2A, H2B, H3 and H4 assembled in one H3-H4 heterotetramer and two H2A-H2B heterodimers. The octamer wraps approximately 147 bp of DNA. Acetylation is generally linked to gene activation. Post-translationally, methylation at Lys-5 is linked to gene activation. Methylation at Lys-10 is linked to gene repression.

Its subcellular location is the nucleus. The protein resides in the chromosome. Core component of nucleosome. Nucleosomes wrap and compact DNA into chromatin, limiting DNA accessibility to the cellular machineries which require DNA as a template. Histones thereby play a central role in transcription regulation, DNA repair, DNA replication and chromosomal stability. DNA accessibility is regulated via a complex set of post-translational modifications of histones, also called histone code, and nucleosome remodeling. The chain is Histone H3 from Acropora formosa (Staghorn coral).